Reading from the N-terminus, the 207-residue chain is N-(5'-phosphoribosyl)anthranilate isomerase (207 aa).

This sequence belongs to the TrpF family.

It catalyses the reaction N-(5-phospho-beta-D-ribosyl)anthranilate = 1-(2-carboxyphenylamino)-1-deoxy-D-ribulose 5-phosphate. The protein operates within amino-acid biosynthesis; L-tryptophan biosynthesis; L-tryptophan from chorismate: step 3/5. This is N-(5'-phosphoribosyl)anthranilate isomerase from Legionella pneumophila (strain Corby).